The sequence spans 114 residues: UPF0102 protein CD630_12710 (114 aa).

This sequence belongs to the UPF0102 family.

The polypeptide is UPF0102 protein CD630_12710 (Clostridioides difficile (strain 630) (Peptoclostridium difficile)).